A 126-amino-acid chain; its full sequence is MSISPPDDLVASVTFDDRGLVPAIAQQEGTGEVLMMAWMNAESLRATLETGWATYWSRSRGELWRKGETSGHLQRVRAVHADCDGDTLLLTVDQTGPACHTGTRTCFTGRELVMPPAAVDPEEAAR.

Asp-82 is a Mg(2+) binding site. Cys-83 contributes to the Zn(2+) binding site. Asp-84 and Asp-86 together coordinate Mg(2+). Residues Cys-99 and Cys-106 each contribute to the Zn(2+) site.

It belongs to the PRA-CH family. In terms of assembly, homodimer. Mg(2+) is required as a cofactor. The cofactor is Zn(2+).

It localises to the cytoplasm. The enzyme catalyses 1-(5-phospho-beta-D-ribosyl)-5'-AMP + H2O = 1-(5-phospho-beta-D-ribosyl)-5-[(5-phospho-beta-D-ribosylamino)methylideneamino]imidazole-4-carboxamide. The protein operates within amino-acid biosynthesis; L-histidine biosynthesis; L-histidine from 5-phospho-alpha-D-ribose 1-diphosphate: step 3/9. Catalyzes the hydrolysis of the adenine ring of phosphoribosyl-AMP. This is Phosphoribosyl-AMP cyclohydrolase from Micrococcus luteus (strain ATCC 4698 / DSM 20030 / JCM 1464 / CCM 169 / CCUG 5858 / IAM 1056 / NBRC 3333 / NCIMB 9278 / NCTC 2665 / VKM Ac-2230) (Micrococcus lysodeikticus).